The following is a 122-amino-acid chain: NADH-quinone oxidoreductase subunit A (122 aa).

A run of 3 helical transmembrane segments spans residues 10–30 (LIVF…LTIG), 67–87 (FALL…WAVV), and 91–111 (LGLF…IGLI).

Belongs to the complex I subunit 3 family. NDH-1 is composed of 14 different subunits. Subunits NuoA, H, J, K, L, M, N constitute the membrane sector of the complex.

The protein resides in the cell membrane. It catalyses the reaction a quinone + NADH + 5 H(+)(in) = a quinol + NAD(+) + 4 H(+)(out). In terms of biological role, NDH-1 shuttles electrons from NADH, via FMN and iron-sulfur (Fe-S) centers, to quinones in the respiratory chain. The immediate electron acceptor for the enzyme in this species is believed to be a menaquinone. Couples the redox reaction to proton translocation (for every two electrons transferred, four hydrogen ions are translocated across the cytoplasmic membrane), and thus conserves the redox energy in a proton gradient. This is NADH-quinone oxidoreductase subunit A from Geobacillus thermodenitrificans (strain NG80-2).